A 185-amino-acid chain; its full sequence is Ribosome-recycling factor (185 aa).

The protein belongs to the RRF family.

Its subcellular location is the cytoplasm. Its function is as follows. Responsible for the release of ribosomes from messenger RNA at the termination of protein biosynthesis. May increase the efficiency of translation by recycling ribosomes from one round of translation to another. In Neisseria gonorrhoeae (strain ATCC 700825 / FA 1090), this protein is Ribosome-recycling factor.